Consider the following 441-residue polypeptide: Protein arginine methyltransferase NDUFAF7, mitochondrial (441 aa).

Residues 1–46 (MSVLLRSGLGPLCAVARAAIPFIWRGKYFSSGNEPAENPVTPMLRH) constitute a mitochondrion transit peptide.

The protein belongs to the NDUFAF7 family. As to quaternary structure, interacts with NDUFS2.

The protein localises to the mitochondrion. It carries out the reaction L-arginyl-[protein] + 2 S-adenosyl-L-methionine = N(omega),N(omega)'-dimethyl-L-arginyl-[protein] + 2 S-adenosyl-L-homocysteine + 2 H(+). Arginine methyltransferase involved in the assembly or stability of mitochondrial NADH:ubiquinone oxidoreductase complex (complex I). Acts by mediating symmetric dimethylation of 'Arg-118' of NDUFS2 after it assembles into the complex I, stabilizing the early intermediate complex. The chain is Protein arginine methyltransferase NDUFAF7, mitochondrial from Homo sapiens (Human).